The sequence spans 148 residues: Small ribosomal subunit protein bS6 (148 aa).

The tract at residues 96-148 is disordered; the sequence is HEEGQSAMLTRRDDRRERDGDDRPRRREGGFDRGDRGDRSPRRPRDNEAGEGA.

This sequence belongs to the bacterial ribosomal protein bS6 family.

In terms of biological role, binds together with bS18 to 16S ribosomal RNA. This is Small ribosomal subunit protein bS6 from Brucella suis (strain ATCC 23445 / NCTC 10510).